Here is a 140-residue protein sequence, read N- to C-terminus: 3-hydroxyacyl-[acyl-carrier-protein] dehydratase FabZ (140 aa).

Residue H46 is part of the active site.

It belongs to the thioester dehydratase family. FabZ subfamily.

It localises to the cytoplasm. It catalyses the reaction a (3R)-hydroxyacyl-[ACP] = a (2E)-enoyl-[ACP] + H2O. In terms of biological role, involved in unsaturated fatty acids biosynthesis. Catalyzes the dehydration of short chain beta-hydroxyacyl-ACPs and long chain saturated and unsaturated beta-hydroxyacyl-ACPs. The chain is 3-hydroxyacyl-[acyl-carrier-protein] dehydratase FabZ from Pseudothermotoga lettingae (strain ATCC BAA-301 / DSM 14385 / NBRC 107922 / TMO) (Thermotoga lettingae).